Consider the following 407-residue polypeptide: uncharacterized protein (407 aa).

It belongs to the peptidase U32 family.

This is an uncharacterized protein from Methanocaldococcus jannaschii (strain ATCC 43067 / DSM 2661 / JAL-1 / JCM 10045 / NBRC 100440) (Methanococcus jannaschii).